The primary structure comprises 1337 residues: MTVDNSQIPNLNQPESFADLWDGYENVSKATEKGVLLLKDITKFFKKRIQSEDEYSKTLSKLVLKFEPMAPDGYIGPRLKNTWDQIKLETLTHSNHHENICNNISTHIIEPIEGLIVDLEQKMKSIHVDAEKSFIHYQESVAKLKKAKQNYDRLCKDSFEITGVSKGETQKVQKRAIKAAQDVIKADKDYRAQINETNTSQKQFLTELIPKIMNDLQRLEMVRIHMVKSYFHRYFKSMESTPQKFNTETENLLNLINSINNEDEIQDFVRKSKTTHKYPKPFEYEPYLDRFTTPPPPPPPQISSPQLLSPRGDISIQHSSSSNSLPIFPTQHQLLSNKEKADNNITNSLSLSSDSLQTNLNNGNNGGNGNNGSNTPTKEKKPSSWGLKRFSTSVSSTSDRKLLNKQIQSIGLAHNGGNIFNCKIEDIMVAQKKKYPYLEIPFIVVFLKHKLVALDVFKTQGIFRVPGNVVDINSLKKRFDEGNYEVAPTENVYTIASLLKLWLREITEPLFPLTVYDQCIENSNKREKIFEIISSLPILNQKTISYIIELLQECGKSVNVEHNKMNFPNLAMVFSPCFLRCSHTDPNILLGNIFKEKEFVQNIIEHFKPLQVNDSLEGPPSSSSSSSTSINQSSIESPPTSPLRSSTNSNANKSSTPIKPSSPSQQQQQQQQQQQSSTPSTPLSSTTNTNVKHNILSPIVEQQSPNNGKQPIALTQTYSHLNIGSVPLIINTVNNNNQNQNQNQNQNQNQDQNQNQSKQPIQSSNQTQQQVSAPATPHTVAVNPKINQIKAETITTPQKSIGDGNGLIGQSPSAHLMSPSEVKRRSNAIYLEDQERCKQRIDELHTQVNELYSDITTIETTTYFAMQSSLLITKLTKSLESFLTIDMWNLTLQDIKEAIEKNKFVSPPPINFKIPSKMPKLSPIELVQNEQSSELLRSWLSNVTLTVNRINEYLCYLGGVVIRIHSPDTLFAISNLFTDYDLSPQQNPKFVSLTLEQSTIFIQKTLALLEPLNPFTSDELNINVKVQDTITPASFSPALISDPDCNSPPTISNTTNRLLNTSGSTDFSTTPLSSSPSTSSTSLSTNNNNNNNGNRNLDINNSPTIVITNSSLNKSALSTNNNNNNNNNNNNNPTTKLSSSTSSTSTTTTTNTNTNTTTNEKIAHAIISPSSSTTSFKFDDDEDEDEDLLEINNKLHSQLTEELKKKQQQYKQLIFDIIDMIKDKKKLMNSLDLTNSDSQLDIKSIAKLSLSLKRALDNFTSESGFDIEDEQDPIINKENDSFVNLKIMTSHFISRIVLILTTILSISNEFNSTLYQLLLPFNENNNNNNENNNINNQ.

An F-BAR domain is found at P14 to E264. Disordered regions lie at residues P279 to F328 and I345 to T392. The span at T293–I302 shows a compositional bias: pro residues. The segment covering I345–T358 has biased composition (polar residues). Residues C422–Q611 form the Rho-GAP domain. Disordered stretches follow at residues V612–T689, V733–A781, and I794–E821. Low complexity-rich tracts occupy residues S621 to S637, S645 to T687, and N734 to S772. The stretch at Y830–E859 forms a coiled coil. 2 disordered regions span residues S1041 to S1102 and K1114 to I1166. Residues S1047 to G1063 are compositionally biased toward polar residues. Composition is skewed to low complexity over residues S1064–S1102 and K1114–N1159. Positions L1189 to D1219 form a coiled coil.

It is found in the cytoplasm. Its subcellular location is the contractile vacuole. Rho GTPase-activating protein involved in the signal transduction pathway. This Dictyostelium discoideum (Social amoeba) protein is GTPase activating protein homolog 3 (mgp3).